A 62-amino-acid polypeptide reads, in one-letter code: Photosystem II reaction center protein Z (62 aa).

2 consecutive transmembrane segments (helical) span residues Thr8–Ala28 and Phe41–Val61.

It belongs to the PsbZ family. As to quaternary structure, PSII is composed of 1 copy each of membrane proteins PsbA, PsbB, PsbC, PsbD, PsbE, PsbF, PsbH, PsbI, PsbJ, PsbK, PsbL, PsbM, PsbT, PsbY, PsbZ, Psb30/Ycf12, at least 3 peripheral proteins of the oxygen-evolving complex and a large number of cofactors. It forms dimeric complexes.

The protein resides in the plastid. It is found in the chloroplast thylakoid membrane. Functionally, may control the interaction of photosystem II (PSII) cores with the light-harvesting antenna, regulates electron flow through the 2 photosystem reaction centers. PSII is a light-driven water plastoquinone oxidoreductase, using light energy to abstract electrons from H(2)O, generating a proton gradient subsequently used for ATP formation. This is Photosystem II reaction center protein Z from Oltmannsiellopsis viridis (Marine flagellate).